Consider the following 218-residue polypeptide: 7-cyano-7-deazaguanine synthase 1 (218 aa).

9–19 (YSGGMDSFTVL) provides a ligand contact to ATP. The Zn(2+) site is built by C185, C193, C196, and C199.

It belongs to the QueC family. Zn(2+) is required as a cofactor.

The catalysed reaction is 7-carboxy-7-deazaguanine + NH4(+) + ATP = 7-cyano-7-deazaguanine + ADP + phosphate + H2O + H(+). It functions in the pathway purine metabolism; 7-cyano-7-deazaguanine biosynthesis. Functionally, catalyzes the ATP-dependent conversion of 7-carboxy-7-deazaguanine (CDG) to 7-cyano-7-deazaguanine (preQ(0)). In Colwellia psychrerythraea (strain 34H / ATCC BAA-681) (Vibrio psychroerythus), this protein is 7-cyano-7-deazaguanine synthase 1.